A 650-amino-acid chain; its full sequence is DNA gyrase subunit B (650 aa).

Over residues 400-414 (RRSQEARELTRRKSP) the composition is skewed to basic and acidic residues. Residues 400–422 (RRSQEARELTRRKSPFDSGSLPG) are disordered. The 115-residue stretch at 435–549 (SELYIVEGDS…QGNIFIAQPP (115 aa)) folds into the Toprim domain. The Mg(2+) site is built by glutamate 441, aspartate 514, and aspartate 516.

This sequence belongs to the type II topoisomerase GyrB family. As to quaternary structure, heterotetramer, composed of two GyrA and two GyrB chains. In the heterotetramer, GyrA contains the active site tyrosine that forms a transient covalent intermediate with DNA, while GyrB binds cofactors and catalyzes ATP hydrolysis. Requires Mg(2+) as cofactor. The cofactor is Mn(2+). It depends on Ca(2+) as a cofactor.

The protein resides in the cytoplasm. The catalysed reaction is ATP-dependent breakage, passage and rejoining of double-stranded DNA.. In terms of biological role, a type II topoisomerase that negatively supercoils closed circular double-stranded (ds) DNA in an ATP-dependent manner to modulate DNA topology and maintain chromosomes in an underwound state. Negative supercoiling favors strand separation, and DNA replication, transcription, recombination and repair, all of which involve strand separation. Also able to catalyze the interconversion of other topological isomers of dsDNA rings, including catenanes and knotted rings. Type II topoisomerases break and join 2 DNA strands simultaneously in an ATP-dependent manner. The protein is DNA gyrase subunit B of Mycoplasma genitalium (strain ATCC 33530 / DSM 19775 / NCTC 10195 / G37) (Mycoplasmoides genitalium).